A 349-amino-acid polypeptide reads, in one-letter code: Dipeptide transport ATP-binding protein DppD (349 aa).

Residues 7–258 (LEVKNLHVNF…PQHPYTWGLL (252 aa)) form the ABC transporter domain. 43–50 (GESGSGKS) lines the ATP pocket.

The protein belongs to the ABC transporter superfamily. In terms of assembly, the complex is composed of two ATP-binding proteins (DppD and DppF), two transmembrane proteins (DppB and DppC) and a solute-binding protein (DppA).

Its subcellular location is the cell membrane. The enzyme catalyses a dipeptide(out) + ATP + H2O = a dipeptide(in) + ADP + phosphate + H(+). Functionally, part of the ABC transporter DppABCDF involved in dipeptide transport. Responsible for energy coupling to the transport system. In Lactococcus lactis subsp. cremoris (strain MG1363), this protein is Dipeptide transport ATP-binding protein DppD.